A 509-amino-acid polypeptide reads, in one-letter code: Probable cytochrome P450 519B1 (509 aa).

A helical membrane pass occupies residues 1–21; sequence MNLINLILYFILFWIVFDFIR. C456 contacts heme.

Belongs to the cytochrome P450 family. Heme is required as a cofactor.

Its subcellular location is the membrane. This Dictyostelium discoideum (Social amoeba) protein is Probable cytochrome P450 519B1 (cyp519B1).